Reading from the N-terminus, the 885-residue chain is Leucine--tRNA ligase (885 aa).

A 'HIGH' region motif is present at residues 48–58; that stretch reads PYPSGKLHMGH. Positions 639 to 643 match the 'KMSKS' region motif; it reads TMSKS. Lysine 642 lines the ATP pocket.

It belongs to the class-I aminoacyl-tRNA synthetase family.

Its subcellular location is the cytoplasm. It carries out the reaction tRNA(Leu) + L-leucine + ATP = L-leucyl-tRNA(Leu) + AMP + diphosphate. This chain is Leucine--tRNA ligase, found in Bordetella petrii (strain ATCC BAA-461 / DSM 12804 / CCUG 43448).